Here is a 980-residue protein sequence, read N- to C-terminus: Envelope glycoprotein B (980 aa).

Polar residues predominate over residues 1–14 (MSSGCRSVGGSTWG). Disordered stretches follow at residues 1 to 20 (MSSG…RGDG) and 88 to 118 (TTPS…TETP). A signal peptide spans 1–86 (MSSGCRSVGG…LFGSCVVRAV (86 aa)). At 87 to 849 (PTTPSPPTST…SGIASFLNNP (763 aa)) the chain is on the virion surface side. Over residues 96–118 (TPTSMSTHSHGTVDPTLLPTETP) the composition is skewed to low complexity. 5 disulfides stabilise this stretch: Cys-140–Cys-647, Cys-157–Cys-603, Cys-231–Cys-296, Cys-389–Cys-437, and Cys-668–Cys-708. N-linked (GlcNAc...) asparagine; by host glycosylation is present at Asn-165. An involved in fusion and/or binding to host membrane region spans residues 197 to 203 (VWKGYSH). Asn-275 is a glycosylation site (N-linked (GlcNAc...) asparagine; by host). The interval 282-290 (GWMPWRHYT) is involved in fusion and/or binding to host membrane. N-linked (GlcNAc...) asparagine; by host glycosylation is found at Asn-380, Asn-423, Asn-497, Asn-514, Asn-515, and Asn-560. The span at 505-516 (LLNPNANNNNNT) shows a compositional bias: low complexity. Positions 505–535 (LLNPNANNNNNTTRRRRSLLSVPEPQPTQDG) are disordered. Residues Asn-727 and Asn-749 are each glycosylated (N-linked (GlcNAc...) asparagine; by host). Hydrophobic membrane proximal region regions lie at residues 794–847 (IDSV…SFLN) and 823–843 (AVGT…SGIA). Residues 850 to 870 (FGGLAIGLLVIAGLVAAFFAY) form a helical membrane-spanning segment. At 871–980 (RYVMQIRSNP…NDTMENEKMV (110 aa)) the chain is on the intravirion side. A Golgi targeting motif is present at residues 925-928 (YMSM). Positions 965–968 (YTRL) match the Internalization motif motif.

Belongs to the herpesviridae glycoprotein B family. In terms of assembly, homotrimer; disulfide-linked. Binds to heparan sulfate proteoglycans. Interacts with gH/gL heterodimer. Post-translationally, a proteolytic cleavage by host furin generates two subunits that remain linked by disulfide bonds.

The protein resides in the virion membrane. Its subcellular location is the host cell membrane. It localises to the host endosome membrane. It is found in the host Golgi apparatus membrane. Functionally, envelope glycoprotein that forms spikes at the surface of virion envelope. Essential for the initial attachment to heparan sulfate moieties of the host cell surface proteoglycans. Involved in fusion of viral and cellular membranes leading to virus entry into the host cell. Following initial binding to its host receptors, membrane fusion is mediated by the fusion machinery composed at least of gB and the heterodimer gH/gL. May be involved in the fusion between the virion envelope and the outer nuclear membrane during virion egress. This chain is Envelope glycoprotein B, found in Equus caballus (Horse).